Reading from the N-terminus, the 696-residue chain is Glycine--tRNA ligase beta subunit (696 aa).

This sequence belongs to the class-II aminoacyl-tRNA synthetase family. In terms of assembly, tetramer of two alpha and two beta subunits.

It localises to the cytoplasm. The enzyme catalyses tRNA(Gly) + glycine + ATP = glycyl-tRNA(Gly) + AMP + diphosphate. The chain is Glycine--tRNA ligase beta subunit from Aromatoleum aromaticum (strain DSM 19018 / LMG 30748 / EbN1) (Azoarcus sp. (strain EbN1)).